The primary structure comprises 259 residues: Adenylosuccinate synthetase (259 aa).

GTP-binding positions include 3 to 9 and 31 to 33; these read GDEGKGK and GHT. Residue D4 is the Proton acceptor of the active site. Mg(2+)-binding residues include D4 and G31. 4–7 is an IMP binding site; the sequence is DEGK. The active-site Proton donor is the H32. Positions 120, 134, 215, and 230 each coordinate IMP.

The protein belongs to the adenylosuccinate synthetase family. In terms of assembly, homodimer. It depends on Mg(2+) as a cofactor.

It is found in the cytoplasm. It carries out the reaction IMP + L-aspartate + GTP = N(6)-(1,2-dicarboxyethyl)-AMP + GDP + phosphate + 2 H(+). The protein operates within purine metabolism; AMP biosynthesis via de novo pathway; AMP from IMP: step 1/2. Plays an important role in the de novo pathway of purine nucleotide biosynthesis. Catalyzes the first committed step in the biosynthesis of AMP from IMP. The chain is Adenylosuccinate synthetase from Aggregatibacter actinomycetemcomitans (Actinobacillus actinomycetemcomitans).